The chain runs to 83 residues: Small ribosomal subunit protein bS20 (83 aa).

The tract at residues 1 to 25 (MPNIKSAIKRVNTTHTAEERNISQK) is disordered. Residues 16–25 (TAEERNISQK) are compositionally biased toward basic and acidic residues.

This sequence belongs to the bacterial ribosomal protein bS20 family.

Binds directly to 16S ribosomal RNA. The polypeptide is Small ribosomal subunit protein bS20 (Staphylococcus saprophyticus subsp. saprophyticus (strain ATCC 15305 / DSM 20229 / NCIMB 8711 / NCTC 7292 / S-41)).